Reading from the N-terminus, the 133-residue chain is Bacteriohemerythrin (133 aa).

Histidine 19, histidine 56, glutamate 60, histidine 75, histidine 79, histidine 115, and aspartate 120 together coordinate Fe cation.

This sequence belongs to the hemerythrin family. Monomer.

Oxygen-binding protein. May be involved in a storage mechanism or for delivery to oxygen-requiring enzymes. The oxygen-binding site contains two iron atoms. This chain is Bacteriohemerythrin, found in Campylobacter jejuni subsp. jejuni serotype O:6 (strain 81116 / NCTC 11828).